Reading from the N-terminus, the 365-residue chain is MTNVSDEKRILIMAGGTGGHVFPALAVAKYLSKQGWKVRWLGTAERMEARLVPQHGFDIDFIDIKGVRGNGVVRKLAAPFKVLRSITQARVVIKEFQPDVVLGMGGFASGPGGVAARLSGIPLVLHEQNAIPGMTNKILSRIASQVLCAFEDTFDQVQAEVVGNPIREELIALGQTPKDAGAKESLKVLVVGGSLGAKVFNDLMPTVTADMSKTHLITVWHQVGKGNLQSVKGEYQRLGLDGSVSVAEFIDDMEAAYRWADVVLCRSGALTVSELAAIGLPSLLVPYPHAVDDHQTKNAQVLVKAGGAFLLPQPILDIDKLIGKLQILSSDRDELDQMGQRAKSVGVIDATQKVADVCIRLAGKS.

Residues 17-19 (TGG), Asn-129, Arg-167, Ser-194, Ile-250, 269-274 (ALTVSE), and Gln-295 each bind UDP-N-acetyl-alpha-D-glucosamine.

Belongs to the glycosyltransferase 28 family. MurG subfamily.

It localises to the cell inner membrane. It catalyses the reaction di-trans,octa-cis-undecaprenyl diphospho-N-acetyl-alpha-D-muramoyl-L-alanyl-D-glutamyl-meso-2,6-diaminopimeloyl-D-alanyl-D-alanine + UDP-N-acetyl-alpha-D-glucosamine = di-trans,octa-cis-undecaprenyl diphospho-[N-acetyl-alpha-D-glucosaminyl-(1-&gt;4)]-N-acetyl-alpha-D-muramoyl-L-alanyl-D-glutamyl-meso-2,6-diaminopimeloyl-D-alanyl-D-alanine + UDP + H(+). The protein operates within cell wall biogenesis; peptidoglycan biosynthesis. Its function is as follows. Cell wall formation. Catalyzes the transfer of a GlcNAc subunit on undecaprenyl-pyrophosphoryl-MurNAc-pentapeptide (lipid intermediate I) to form undecaprenyl-pyrophosphoryl-MurNAc-(pentapeptide)GlcNAc (lipid intermediate II). This is UDP-N-acetylglucosamine--N-acetylmuramyl-(pentapeptide) pyrophosphoryl-undecaprenol N-acetylglucosamine transferase from Shewanella woodyi (strain ATCC 51908 / MS32).